The primary structure comprises 429 residues: Alanine aminotransferase (429 aa).

The L-alanine site is built by glycine 65 and asparagine 204. Lysine 265 is subject to N6-(pyridoxal phosphate)lysine. Arginine 403 lines the L-alanine pocket.

Belongs to the class-I pyridoxal-phosphate-dependent aminotransferase family. In terms of assembly, homodimer. Requires pyridoxal 5'-phosphate as cofactor.

Its subcellular location is the cytoplasm. It catalyses the reaction L-alanine + 2-oxoglutarate = pyruvate + L-glutamate. This chain is Alanine aminotransferase (aspC), found in Mycobacterium bovis (strain ATCC BAA-935 / AF2122/97).